We begin with the raw amino-acid sequence, 792 residues long: E3 UFM1-protein ligase 1 (792 aa).

A2 is subject to N-acetylalanine. The interval 2–200 (ADAWEEIRRL…RGLFSAITRP (199 aa)) is mediates interaction with DDRGK1. Residues 2 to 212 (ADAWEEIRRL…VNSLISRYGF (211 aa)) form a required for E3 UFM1-protein ligase activity region. Residues 121–250 (DRLAEEVNDK…KAVFIPDIYS (130 aa)) are involved in CDK5RAP3-binding. Positions 200–400 (PTAVNSLISR…NPVHLITEED (201 aa)) are mediates interaction with TRIP4. The disordered stretch occupies residues 412-471 (TSKKDKKDERRRKATEGSGSVRGGGGSNAREYKIKKTKKKGRKDDDSDDESSHTGKKKPE). R433 is subject to Omega-N-methylarginine. Positions 453 to 471 (RKDDDSDDESSHTGKKKPE) are enriched in basic and acidic residues. Position 458 is a phosphoserine (S458). A mediates interaction with CDK5RAP3 region spans residues 488-682 (LQDAPEEFIS…QLKVTEDPAL (195 aa)). T534 carries the post-translational modification Phosphothreonine. The residue at position 752 (S752) is a Phosphoserine.

Belongs to the UFL1 family. In terms of assembly, catalytic component of the UFM1 ribosome E3 ligase (UREL) complex, composed of UFL1, DDRGK1 and CDK5RAP3. Interacts with E2-like enzyme UFC1. Interacts with RELA. Interacts with NBN; promoting recruitment to double-strand breaks following DNA damage. Interacts (when phosphorylated) with YWHAG/14-3-3-gamma; sequestering UFL1 and preventing its association with PDCD1/PD-1 substrate. Ubiquitinated, leading to its degradation by the proteasome. Interaction with CDK5RAP3 protects both proteins against ubiquitination and degradation via the proteasome. In terms of processing, phosphorylation at Thr-534 by AMPK promotes its interaction with YWHAG/14-3-3-gamma, thereby preventing UFL1 association with PDCD1/PD-1 substrate.

The protein resides in the endoplasmic reticulum membrane. The protein localises to the cytoplasm. Its subcellular location is the cytosol. It localises to the nucleus. It is found in the chromosome. E3 protein ligase that mediates ufmylation, the covalent attachment of the ubiquitin-like modifier UFM1 to lysine residues on target proteins, and which plays a key role in various processes, such as ribosome recycling, response to DNA damage, interferon response or reticulophagy (also called ER-phagy). Catalyzes ufmylation of many protein, such as CD274/PD-L1, CDK5RAP3, CYB5R3, DDRGK1, EIF6, histone H4, MRE11, P4HB, PDCD1/PD-1, TRIP4, RPN1, RPS20/uS10, RPL10/uL16, RPL26/uL24, SYVN1/HRD1 and TP53/p53. As part of the UREL complex, plays a key role in ribosome recycling by catalyzing mono-ufmylation of RPL26/uL24 subunit of the 60S ribosome. Ufmylation of RPL26/uL24 occurs on free 60S ribosomes following ribosome dissociation: it weakens the junction between post-termination 60S subunits and SEC61 translocons, promoting release and recycling of the large ribosomal subunit from the endoplasmic reticulum membrane. Ufmylation of RPL26/uL24 and subsequent 60S ribosome recycling either take place after normal termination of translation or after ribosome stalling during cotranslational translocation at the endoplasmic reticulum. Involved in reticulophagy in response to endoplasmic reticulum stress by mediating ufmylation of proteins such as CYB5R3 and RPN1, thereby promoting lysosomal degradation of ufmylated proteins. Ufmylation in response to endoplasmic reticulum stress is essential for processes such as hematopoiesis, blood vessel morphogenesis or inflammatory response. Regulates inflammation in response to endoplasmic reticulum stress by promoting reticulophagy, leading to inhibit the activity of the NF-kappa-B transcription factor. Mediates ufmylation of DDRGK1 and CDK5RAP3; the role of these modifications is however unclear: as both DDRGK1 and CDK5RAP3 act as substrate adapters for ufmylation, it is uncertain whether ufmylation of these proteins is, a collateral effect or is required for ufmylation. Acts as a negative regulator of T-cell activation by mediating ufmylation and stabilization of PDCD1/PD-1. Also involved in the response to DNA damage: recruited to double-strand break sites following DNA damage and mediates monoufmylation of histone H4 and ufmylation of MRE11. Mediates ufmylation of TP53/p53, promoting its stability. Catalyzes ufmylation of TRIP4, thereby playing a role in nuclear receptor-mediated transcription. Required for hematopoietic stem cell function and hematopoiesis. The protein is E3 UFM1-protein ligase 1 of Bos taurus (Bovine).